Reading from the N-terminus, the 224-residue chain is uncharacterized protein (224 aa).

The next 4 membrane-spanning stretches (helical) occupy residues 25 to 45 (ALAW…IYGI), 56 to 76 (VFLI…VILP), 107 to 127 (ELFL…YFFV), and 149 to 169 (IFVK…VVYF).

The protein localises to the cell membrane. This is an uncharacterized protein from Mycoplasma pneumoniae (strain ATCC 29342 / M129 / Subtype 1) (Mycoplasmoides pneumoniae).